Here is a 216-residue protein sequence, read N- to C-terminus: NKG2-D type II integral membrane protein (216 aa).

Over 1-51 the chain is Cytoplasmic; sequence MGWIRGRRPRHNLEMSEFHNYKLGLAKSDFSTRCQKQRCPVIKSKCRENAS. A helical; Signal-anchor for type II membrane protein membrane pass occupies residues 52 to 72; sequence PLFFCCFIAVAMGIRFIIMVT. At 73-216 the chain is on the extracellular side; that stretch reads IWSAVFLNSL…NTYICMQRTV (144 aa). 2 cysteine pairs are disulfide-bonded: Cys96-Cys105 and Cys99-Cys110. Positions 98-213 constitute a C-type lectin domain; the sequence is PCPKNWICYK…SIPNTYICMQ (116 aa). N-linked (GlcNAc...) asparagine glycans are attached at residues Asn115, Asn131, Asn163, and Asn202. Cystine bridges form between Cys127–Cys211 and Cys189–Cys203.

As to quaternary structure, homodimer; disulfide-linked. Heterohexamer composed of two subunits of KLRK1 and four subunits of HCST/DAP10. Interacts (via transmembrane domain) with HCST/DAP10 (via transmembrane domain); the interaction is required for KLRK1 NK cell surface and induces NK cell-mediated cytotoxicity. Can form disulfide-bonded heterodimer with CD94. Interacts with CEACAM1; recruits PTPN6 that dephosphorylates VAV1. As to expression, natural killer cells.

The protein resides in the cell membrane. Functionally, functions as an activating and costimulatory receptor involved in immunosurveillance upon binding to various cellular stress-inducible ligands displayed at the surface of autologous tumor cells and virus-infected cells. Provides both stimulatory and costimulatory innate immune responses on activated killer (NK) cells, leading to cytotoxic activity. Acts as a costimulatory receptor for T-cell receptor (TCR) in CD8(+) T-cell-mediated adaptive immune responses by amplifying T-cell activation. Stimulates perforin-mediated elimination of ligand-expressing tumor cells. Signaling involves calcium influx, culminating in the expression of TNF-alpha. Participates in NK cell-mediated bone marrow graft rejection. May play a regulatory role in differentiation and survival of NK cells. Binds to ligands belonging to various subfamilies of MHC class I-related glycoproteins. The sequence is that of NKG2-D type II integral membrane protein (KLRK1) from Macaca fascicularis (Crab-eating macaque).